Reading from the N-terminus, the 338-residue chain is Heat-inducible transcription repressor HrcA (338 aa).

This sequence belongs to the HrcA family.

Functionally, negative regulator of class I heat shock genes (grpE-dnaK-dnaJ and groELS operons). Prevents heat-shock induction of these operons. This chain is Heat-inducible transcription repressor HrcA, found in Bacillus mycoides (strain KBAB4) (Bacillus weihenstephanensis).